The primary structure comprises 121 residues: Large ribosomal subunit protein bL19 (121 aa).

The protein belongs to the bacterial ribosomal protein bL19 family.

Functionally, this protein is located at the 30S-50S ribosomal subunit interface and may play a role in the structure and function of the aminoacyl-tRNA binding site. In Borreliella burgdorferi (strain ZS7) (Borrelia burgdorferi), this protein is Large ribosomal subunit protein bL19.